The primary structure comprises 340 residues: Phosphate acyltransferase (340 aa).

Residues 285-340 (WRQSGRPARHRGQEPRRHRQPRFWLCHRRGRRRSPRQRNRTHPGTGQPPAGCAGAR) form a disordered region. Residues 300–325 (RRHRQPRFWLCHRRGRRRSPRQRNRT) are compositionally biased toward basic residues.

Belongs to the PlsX family. As to quaternary structure, homodimer. Probably interacts with PlsY.

The protein localises to the cytoplasm. The enzyme catalyses a fatty acyl-[ACP] + phosphate = an acyl phosphate + holo-[ACP]. It functions in the pathway lipid metabolism; phospholipid metabolism. Its function is as follows. Catalyzes the reversible formation of acyl-phosphate (acyl-PO(4)) from acyl-[acyl-carrier-protein] (acyl-ACP). This enzyme utilizes acyl-ACP as fatty acyl donor, but not acyl-CoA. In Laribacter hongkongensis (strain HLHK9), this protein is Phosphate acyltransferase.